Reading from the N-terminus, the 348-residue chain is MFYLSTFMTIVISLSLVSCSYDCNNPGYSCKGTCHYYGPCICNEKLMGYDCSVLKSRMSTGSNCTVTCQNNGKCYDGSKCLCSSDYTGDLCEKQTTGARCTLDAVVFEAYRPIGFVGETYLSQSRSCKLLETTSDVPGMIKFERKIFHGDTSMCGLKKHMDIPSAGDVTYEADIYSTFQYNSWGTRDFMDNVKCQYKPTRVGLSMDAPDSLFPIKMSARDGASSNVQATTQSAPISLLFSPQNIPDVKGAMVDYLEVYSINSTSKEYKSVVAVKNGCAQKNEYNVAFSNLDELDPATSKWIGLVKMQAFIIFENEPILFNYRLRFCPDRCTTPTCAAPXVGQATSAAV.

Residues Met1–Cys19 form the signal peptide. In terms of domain architecture, EGF-like spans Thr60–Glu92. 3 cysteine pairs are disulfide-bonded: Cys64/Cys74, Cys68/Cys80, and Cys82/Cys91. In terms of domain architecture, ZP spans Arg99–Gln342.

Prismatic layer of shell (at protein level). Expressed primarily in the mantle with highest level in the mantle edge and lower level in the mantle pallium.

It localises to the secreted. The protein is EGF-like domain-containing protein 1 of Pinctada maxima (Silver-lipped pearl oyster).